We begin with the raw amino-acid sequence, 600 residues long: NADH-quinone oxidoreductase subunit C/D (600 aa).

An NADH dehydrogenase I subunit C region spans residues 1–190 (MVNNMTDLTA…DPFELTKAKQ (190 aa)). Positions 214–600 (DFMFLNLGPN…IDFVMSDVDR (387 aa)) are NADH dehydrogenase I subunit D.

In the N-terminal section; belongs to the complex I 30 kDa subunit family. This sequence in the C-terminal section; belongs to the complex I 49 kDa subunit family. NDH-1 is composed of 13 different subunits. Subunits NuoB, CD, E, F, and G constitute the peripheral sector of the complex.

It is found in the cell inner membrane. It carries out the reaction a quinone + NADH + 5 H(+)(in) = a quinol + NAD(+) + 4 H(+)(out). Its function is as follows. NDH-1 shuttles electrons from NADH, via FMN and iron-sulfur (Fe-S) centers, to quinones in the respiratory chain. The immediate electron acceptor for the enzyme in this species is believed to be ubiquinone. Couples the redox reaction to proton translocation (for every two electrons transferred, four hydrogen ions are translocated across the cytoplasmic membrane), and thus conserves the redox energy in a proton gradient. This Citrobacter koseri (strain ATCC BAA-895 / CDC 4225-83 / SGSC4696) protein is NADH-quinone oxidoreductase subunit C/D.